The following is an 84-amino-acid chain: uncharacterized protein (84 aa).

Residues 62–84 (GYATKKDTMRMSAQKRTTKRLKP) are disordered.

This is an uncharacterized protein from Soybean chlorotic mottle virus.